The following is a 1089-amino-acid chain: Importin subunit beta-3 (1089 aa).

S2 is subject to N-acetylserine. HEAT repeat units lie at residues 6–39 (EEVN…EEWI), 44–78 (IEYL…ALKA), 96–129 (KEVL…IAEC), 138–165 (PELL…ILTT), 175–207 (INSI…YFKQ), 216–252 (LGIL…LVEL), 260–295 (MFDQ…FSEN), 304–359 (QNYG…ALKL), 361–395 (GEYL…SSAA), 399–439 (ADVL…STDF), 441–481 (PFIQ…FSEF), 484–524 (KDIL…AEAA), 526–568 (NKFI…GFAV), 571–613 (EKFH…CRIL), 615–689 (DDFV…ATLL), 692–735 (QFAV…LLAA), 742–781 (ELVL…IKVM), 788–849 (EDQL…LKTT), 852–890 (HYLK…IQYG), 898–930 (KNAF…CAQY), 938–978 (VCIP…LYAY), 986–1017 (DTYT…QLIE), 1028–1063 (NISA…LLGF), and 1066–1089 (SSDA…KWFA). T830 is subject to Phosphothreonine.

The protein belongs to the importin beta family. Importin beta-3 subfamily. As to quaternary structure, interacts with Ran (GSP1); interacts specifically with the GTP-bound form of Ran (GTP-Ran), protecting it from GTP hydrolysis and nucleotide exchange. Interacts with RPL25; this interaction is dissociated by binding to Ran-GTP. Interacts with YAP1; this interaction is dissociated by binding to Ran-GTP. Interacts with NOP1; via its rg-NLS. Interacts with SOF1; via its cNLS. Interacts with histones H3 and H4; via their NLS. Interacts with ABF1.

The protein localises to the cytoplasm. The protein resides in the nucleus. Functionally, functions in nuclear protein import as nuclear transport receptor. Serves as receptor for classical and arginine/glycine-rich nuclear localization signals (cNLS and rg-NLS) in cargo substrates. Its predominant cargo substrate seems to be ribosomal proteins and ribosome biogenesis trans- and cis-acting factors. Required for nuclear transport of YAP1, NOP1 and SOF1. Mediates the nuclear import of histones H3 and H4. Mediates docking of the importin/substrate complex to the nuclear pore complex (NPC) through binding to repeat-containing nucleoporins. The complex is subsequently translocated through the pore by an energy requiring, Ran-dependent mechanism. At the nucleoplasmic side of the NPC, GTP-Ran binding leads to release of the cargo. The importin is re-exported from the nucleus to the cytoplasm where GTP hydrolysis releases Ran from importin. The directionality of nuclear import is thought to be conferred by an asymmetric distribution of the GTP- and GDP-bound forms of Ran between the cytoplasm and nucleus. Plays a role in protein secretion. This chain is Importin subunit beta-3, found in Saccharomyces cerevisiae (strain ATCC 204508 / S288c) (Baker's yeast).